Reading from the N-terminus, the 425-residue chain is Glutamyl-tRNA reductase (425 aa).

Substrate-binding positions include 49–52 (TCNR), Ser107, 112–114 (EPQ), and Gln118. Residue Cys50 is the Nucleophile of the active site. 187-192 (GAGETI) provides a ligand contact to NADP(+).

The protein belongs to the glutamyl-tRNA reductase family. Homodimer.

The catalysed reaction is (S)-4-amino-5-oxopentanoate + tRNA(Glu) + NADP(+) = L-glutamyl-tRNA(Glu) + NADPH + H(+). It functions in the pathway porphyrin-containing compound metabolism; protoporphyrin-IX biosynthesis; 5-aminolevulinate from L-glutamyl-tRNA(Glu): step 1/2. Catalyzes the NADPH-dependent reduction of glutamyl-tRNA(Glu) to glutamate 1-semialdehyde (GSA). This chain is Glutamyl-tRNA reductase, found in Pseudomonas syringae pv. tomato (strain ATCC BAA-871 / DC3000).